The sequence spans 319 residues: MTEPLRIVFAGTPEFAAEHLKALLDSPYEIVAVYTQPDRPAGRGQKLMPSPVKQLALENNIQVLQPPTLRNADAQAELAALKPDLMVVVAYGLILPQAVLDIPRLGCINSHASLLPRWRGAAPIQRAVEAGDAESGVTVMRMEAGLDTGPMLLKVVTPISAEDTGGSLHDRLAEMGPPAVVQAIAGLAAGTLEGEVQNDELATYAHKLNKDEARIDWSRPAVELERLVRAFNPWPITHSTLNGEALKVLAATLAEGKGAPGTILGASKDGLIVACGEQALCLTRLQLPGGKALNFSDLFNSRREKFATGIVLGAAVDAQ.

113-116 is a binding site for (6S)-5,6,7,8-tetrahydrofolate; that stretch reads SLLP.

The protein belongs to the Fmt family.

The enzyme catalyses L-methionyl-tRNA(fMet) + (6R)-10-formyltetrahydrofolate = N-formyl-L-methionyl-tRNA(fMet) + (6S)-5,6,7,8-tetrahydrofolate + H(+). Attaches a formyl group to the free amino group of methionyl-tRNA(fMet). The formyl group appears to play a dual role in the initiator identity of N-formylmethionyl-tRNA by promoting its recognition by IF2 and preventing the misappropriation of this tRNA by the elongation apparatus. The polypeptide is Methionyl-tRNA formyltransferase (Pseudomonas fluorescens (strain Pf0-1)).